The following is a 539-amino-acid chain: Putative serine/threonine-protein kinase L670 (539 aa).

A Cyclin N-terminal domain is found at 1–115; that stretch reads MSLFNNHPEL…ILKVFKFGLH (115 aa). The region spanning 258–519 is the Protein kinase domain; sequence MNVIEKLGIG…VLKIFSECFV (262 aa). ATP is bound by residues 264 to 272 and Lys-285; that span reads LGIGSFGLV. Asp-375 serves as the catalytic Proton acceptor.

Belongs to the protein kinase superfamily. Ser/Thr protein kinase family.

It carries out the reaction L-seryl-[protein] + ATP = O-phospho-L-seryl-[protein] + ADP + H(+). It catalyses the reaction L-threonyl-[protein] + ATP = O-phospho-L-threonyl-[protein] + ADP + H(+). This Acanthamoeba polyphaga mimivirus (APMV) protein is Putative serine/threonine-protein kinase L670.